The sequence spans 430 residues: Alpha-(1-&gt;3)-arabinofuranosyltransferase (430 aa).

10 consecutive transmembrane segments (helical) span residues 26–46, 114–134, 136–156, 160–180, 194–214, 218–238, 276–296, 307–327, 352–372, and 381–401; these read APST…LSVI, WYIS…LRIF, YTLS…TESV, LVFT…FRWL, AIGL…LPVL, FYTL…AWPL, WLIL…LWLL, FWLL…LSLG, WPAW…LGHW, and YMKI…VLYF.

The protein belongs to the glycosyltransferase 87 family.

It localises to the cell membrane. It catalyses the reaction Adds an alpha-D-arabinofuranosyl group from trans,octacis-decaprenylphospho-beta-D-arabinofuranose at the 3-O-position of an alpha-(1-&gt;5)-arabinofuranan chain attached to a beta-(1-&gt;5)-galactofuranan chain.. It participates in cell wall biogenesis; cell wall polysaccharide biosynthesis. Functionally, involved in the biosynthesis of the arabinogalactan (AG) region of the mycolylarabinogalactan-peptidoglycan (mAGP) complex, an essential component of the mycobacterial cell wall. Catalyzes the addition of an arabinofuranosyl (Araf) residue from the sugar donor beta-D-arabinofuranosyl-1-monophosphoryldecaprenol (DPA) on the C-3 of an alpha-(1-&gt;5)-linked Araf from the arabinan backbone of AG. This chain is Alpha-(1-&gt;3)-arabinofuranosyltransferase (aftC), found in Mycolicibacterium smegmatis (strain ATCC 700084 / mc(2)155) (Mycobacterium smegmatis).